The primary structure comprises 430 residues: Asparagine--tRNA ligase (430 aa).

It belongs to the class-II aminoacyl-tRNA synthetase family. As to quaternary structure, homodimer.

It localises to the cytoplasm. The enzyme catalyses tRNA(Asn) + L-asparagine + ATP = L-asparaginyl-tRNA(Asn) + AMP + diphosphate + H(+). The chain is Asparagine--tRNA ligase from Staphylococcus aureus (strain bovine RF122 / ET3-1).